Consider the following 244-residue polypeptide: U11/U12 small nuclear ribonucleoprotein 35 kDa protein (244 aa).

Residues 51–129 (LTLFVARLNS…HEIFVDYELE (79 aa)) enclose the RRM domain. Basic and acidic residues predominate over residues 146–162 (GKKESGQLRFGGRDRPF). The disordered stretch occupies residues 146 to 244 (GKKESGQLRF…KTRDKRDRSK (99 aa)). Lys172 is covalently cross-linked (Glycyl lysine isopeptide (Lys-Gly) (interchain with G-Cter in SUMO2)). Composition is skewed to basic and acidic residues over residues 173 to 185 (NEPHREGKRERRE) and 192 to 244 (RHWD…DRSK).

Component of the U11/U12 snRNPs that are part of the U12-type spliceosome.

The protein resides in the nucleus. This is U11/U12 small nuclear ribonucleoprotein 35 kDa protein (Snrnp35) from Rattus norvegicus (Rat).